Consider the following 376-residue polypeptide: dTDP-4-amino-4,6-dideoxygalactose transaminase (376 aa).

Lysine 181 is subject to N6-(pyridoxal phosphate)lysine.

It belongs to the DegT/DnrJ/EryC1 family. As to quaternary structure, homotetramer. It depends on pyridoxal 5'-phosphate as a cofactor.

It catalyses the reaction dTDP-4-amino-4,6-dideoxy-alpha-D-galactose + 2-oxoglutarate = dTDP-4-dehydro-6-deoxy-alpha-D-glucose + L-glutamate. It functions in the pathway bacterial outer membrane biogenesis; enterobacterial common antigen biosynthesis. In terms of biological role, catalyzes the synthesis of dTDP-4-amino-4,6-dideoxy-D-galactose (dTDP-Fuc4N) from dTDP-4-keto-6-deoxy-D-glucose (dTDP-D-Glc4O) and L-glutamate. The sequence is that of dTDP-4-amino-4,6-dideoxygalactose transaminase from Escherichia coli (strain K12).